The following is a 164-amino-acid chain: UBA-like domain-containing protein 2 (164 aa).

N-acetylserine is present on Ser2. The interval 144-164 (PPGASQGGAPQKAMAAMDGQR) is disordered.

Belongs to the UBALD family.

The chain is UBA-like domain-containing protein 2 (Ubald2) from Mus musculus (Mouse).